We begin with the raw amino-acid sequence, 77 residues long: MSRVCQVTGKGPVTGNNISHANNKTRRRFLPNLQHHRFWVEEEKRFVRLRVSAKGMRIIDKRGISVVLAELRRDGKV.

The interval 1–20 (MSRVCQVTGKGPVTGNNISH) is disordered.

Belongs to the bacterial ribosomal protein bL28 family.

The polypeptide is Large ribosomal subunit protein bL28 (Pseudomonas fluorescens (strain Pf0-1)).